The primary structure comprises 147 residues: Mineralocorticoid receptor (147 aa).

The region spanning 1 to 147 (FALSWRSYKH…SQALKVEFPA (147 aa)) is the NR LBD domain. 21-hydroxyprogesterone is bound by residues Arg6 and Thr134. Positions 6 and 134 each coordinate aldosterone. Arg6 and Thr134 together coordinate progesterone.

This sequence belongs to the nuclear hormone receptor family. NR3 subfamily.

The protein localises to the cytoplasm. The protein resides in the nucleus. In terms of biological role, receptor for both mineralocorticoids (MC) such as aldosterone and glucocorticoids (GC) such as corticosterone or cortisol. Binds to mineralocorticoid response elements (MRE) and transactivates target genes. The effect of MC is to increase ion and water transport and thus raise extracellular fluid volume and blood pressure and lower potassium levels. In Gallus gallus (Chicken), this protein is Mineralocorticoid receptor (NR3C2).